The primary structure comprises 158 residues: Kelch repeat protein B10 (158 aa).

Kelch repeat units lie at residues 25–76 and 77–129; these read TIFV…STFG and MLYF…KLNN.

It belongs to the poxviruses Kelch family.

The sequence is that of Kelch repeat protein B10 from Vaccinia virus (strain Ankara) (VACV).